A 337-amino-acid chain; its full sequence is GDP-mannose transporter 1 (337 aa).

The Cytoplasmic segment spans residues 1–16 (MSELKTGHAGHNPWAS). Residues 17–37 (VANSGPISILSYCGSSILMTV) form a helical membrane-spanning segment. Over 38–51 (TNKFVVNLKDFNMN) the chain is Lumenal. Residues 52-72 (FVMLFVQSLVCTITLIILRIL) form a helical membrane-spanning segment. Residues 73 to 92 (GYAKFRSLNKTDAKNWFPIS) lie on the Cytoplasmic side of the membrane. The chain crosses the membrane as a helical span at residues 93 to 113 (FLLVLMIYTSSKALQYLAVPI). The Lumenal segment spans residues 114–119 (YTIFKN). Asn-119 is a glycosylation site (N-linked (GlcNAc...) asparagine). A helical membrane pass occupies residues 120–140 (LTIILIAYGEVLFFGGSVTSM). Residues 141–144 (ELSS) lie on the Cytoplasmic side of the membrane. Residues 145–165 (FLLMVLSSVVATWGDQQAVAA) traverse the membrane as a helical segment. Residues 166–180 (KAASLAEGAAGAVAS) are Lumenal-facing. The chain crosses the membrane as a helical span at residues 181–201 (FNPGYFWMFTNCITSALFVLI). The Cytoplasmic segment spans residues 202 to 215 (MRKRIKLTNFKDFD). The helical transmembrane segment at 216 to 236 (TMFYNNVLALPILLLFSFCVE) threads the bilayer. The Lumenal portion of the chain corresponds to 237 to 252 (DWSSVNLTNNFSNDSL). N-linked (GlcNAc...) asparagine glycosylation is found at Asn-242, Asn-246, and Asn-249. Residues 253–273 (TAMIISGVASVGISYCSGWCV) traverse the membrane as a helical segment. At 274 to 279 (RVTSST) the chain is on the cytoplasmic side. Residues 280–300 (TYSMVGALNKLPIALSGLIFF) form a helical membrane-spanning segment. Residues 301 to 304 (DAPR) are Lumenal-facing. The helical transmembrane segment at 305-325 (NFLSILSIFIGFLSGIIYAVA) threads the bilayer. The Cytoplasmic segment spans residues 326-337 (KQKKQQAQPLRK).

It belongs to the TPT transporter family. SLC35D subfamily. As to quaternary structure, homooligomer.

It is found in the golgi apparatus membrane. The protein resides in the cytoplasmic vesicle membrane. It localises to the endoplasmic reticulum membrane. Involved in the import of GDP-mannose from the cytoplasm into the Golgi lumen. Defective copy causes severe glycosylation defect and abnormal retention of soluble endoplasmic reticulum proteins. Involved in vanadate sensitivity. The protein is GDP-mannose transporter 1 (VRG4) of Saccharomyces cerevisiae (strain YJM789) (Baker's yeast).